A 174-amino-acid polypeptide reads, in one-letter code: Solute carrier family 2, facilitated glucose transporter member 4 (174 aa).

At 1–19 (QQIGSEDGEPPQQRVTGTL) the chain is on the cytoplasmic side. The interaction with SRFBP1 stretch occupies residues 2-8 (QIGSEDG). Ser-5 carries the phosphoserine modification. Residues 20 to 40 (VLAVFSAVLGSLQFGYNIGVI) traverse the membrane as a helical segment. Residues 41–76 (NAPQKVIEQSYNETWLGRQGPNGPGSIPPGTLTTLW) are Extracellular-facing. N-linked (GlcNAc...) asparagine glycosylation is present at Asn-52. The helical transmembrane segment at 77 to 97 (ALSVAIFSVGGMFSSFLLGII) threads the bilayer. The Cytoplasmic portion of the chain corresponds to 98 to 114 (SQWLGRKKAMLFNNTLA). A helical membrane pass occupies residues 115–135 (VLAGALMGLAKAAASYEMLIL). Topologically, residues 136 to 137 (GR) are extracellular. The chain crosses the membrane as a helical span at residues 138–158 (FLIGAYSGLASGLVPMYVGEI). At 159–166 (APTHLRGA) the chain is on the cytoplasmic side. Residues 167 to 174 (LGTLNQLA) form a helical membrane-spanning segment.

The protein belongs to the major facilitator superfamily. Sugar transporter (TC 2.A.1.1) family. Glucose transporter subfamily. As to quaternary structure, binds to DAXX. Interacts via its N-terminus with SRFBP1. Interacts with NDUFA9. Interacts with TRARG1; the interaction is required for proper SLC2A4 recycling after insulin stimulation. Sumoylated. Post-translationally, palmitoylated. Palmitoylation by ZDHHC7 controls the insulin-dependent translocation of GLUT4 to the plasma membrane.

The protein resides in the cell membrane. Its subcellular location is the endomembrane system. It localises to the cytoplasm. The protein localises to the perinuclear region. It carries out the reaction D-glucose(out) = D-glucose(in). Its function is as follows. Insulin-regulated facilitative glucose transporter, which plays a key role in removal of glucose from circulation. Response to insulin is regulated by its intracellular localization: in the absence of insulin, it is efficiently retained intracellularly within storage compartments in muscle and fat cells. Upon insulin stimulation, translocates from these compartments to the cell surface where it transports glucose from the extracellular milieu into the cell. The polypeptide is Solute carrier family 2, facilitated glucose transporter member 4 (Sus scrofa (Pig)).